Consider the following 1598-residue polypeptide: MGVPTKISILGRESIVADFGIWRNYVAKDLLSSCASSTYILISDTNLTPLYLAGFQQSFENAAAGLSPKPRLLTYEIPPGESSKSRETKADIEDWMLTRQPPCGRDTVIIALGGGVIGDLIGFVAATYMRGVRFVQVPTTLLAMVDSSIGGKTAIDTPNGKNLIGAIWQPQRIYLDMEFLNTLPEREFINGMAEVIKTAAISSEEKFAALENDADVILAAVKSKNTPERLRFSNIQETLKRTILSSAEFKAQVVSADEREGGLRNLLNFGHSIGHAIEAILAPQVLHGECVSIGMVKEAELARHLGILNNVSVARIVKCLASYELPTSLKDERIKRLTAGKHCSVEQIIAYMGVDKKNDGPKKKVVLLSAIGRTYEPRACTVSNEDLQVVLAPSIEVYPGFPKSLNVTCTPPGSKSISNRALVLAALGSGTCRIKNLLHSDDTEVMLTALERLGAATFSWENQGEVLVVNGNGGRMVASPKELYLGNAGTASRFLTTVATLAQNGSVASSVLTGNARMKQRPIGDLVDALKANGADIEYLENPKSLPLKITASGGFAGGEIRLSAKVSSQYVSSLLMCAPYAKEPVTLRLVGGNPVSQLYIDMTTAMMRSFGIDVKKSETEEHTYHIPRGVYKNPAEYVVESDASSATYPLAIAAMTGTSCTVPNIGSKSLQGDARFAIDVLRPMGCTVNQTDFSTSVTGPAGGKLKSIPTIDMEPMTDAFLTASVLAAVARGQGSNHTTRICGIANQRVKECNRIKAMKDELAKFGVTCREHDDGLEIDGIDRSTLCHPPEGVFCYDDHRVAMSFSILALAAEQPTLILEKECVGKTWPGWWDTLAQTFKVKLDGKEVEVEEKAETNGVAHVDKSAASIFIIGMRGAGKTTSGVWVSKALQRPFIDLDDELEKNEGMTIPEMIKQRGWEGFRDSELALLRRVMTEKPMGYIFACGGGVVELPEARELLTQYHKTKGNVILAMRDIKEVMDFLKIDKTRPAYVEDMMSVWLRRKPWYQECSNIQYYSRITQPDGMAQVLHGFNRFLKVITGKLDSLAQMRRKENTFFVSLTFPDLTPASNILKEVTLGSDAVELRVDLLKDPQSDSEIPSVDYVAEQISVLRSRVSVPLVFTIRTKSQGGRFPDDAYDAALRLYCLAIRMGSEFVDLELSFPEQLLRTVTEMKGFSKIIASHHDPEGLLSWANGSWIQIYNKALQYGDVIKLVGVAKTLDDNASLKKFKTWAEAKHDVPLIAINMGYKGQLSRILNGFMTPVSHPGLPFKAAPGQLSAREIRKGLSLMGEIKAKKFAVIGKPVSSSRSPAMHNALFKQMGLPHTYGRIETDNPEDVKEFIRSPDFGGASVTIPLKLDIMPLLDEIAPEAEMIGAVNTIVSVPAAPGDKSQSSRLIGRNTDWQGMVRCLSDAGAYSAATPTTSSAGLIIGGGGTARAAIFALNSMSYSPIYIVGRSPEKLACMASSFPADYNIRIVDDVKALESLPMVAIGTIPGDKPIELHMREVLCEILSLCEKANVEAERRTGITPKRILLEMAYKPSVTSLMKLASDAGWTVLPGLEVLVAQGVYQSEYWTDITPVYENARKAVMGVSSSDDIIS.

The interval Met1–Asn384 is 3-dehydroquinate synthase. NAD(+) contacts are provided by residues Asp44–Asn46, Glu81–Lys84, Gly114–Val116, and Asp119. Position 130 (Arg130) interacts with 7-phospho-2-dehydro-3-deoxy-D-arabino-heptonate. Thr139–Thr140 contacts NAD(+). 7-phospho-2-dehydro-3-deoxy-D-arabino-heptonate-binding residues include Asp146 and Lys152. An NAD(+)-binding site is contributed by Lys161. Residue Asn162 participates in 7-phospho-2-dehydro-3-deoxy-D-arabino-heptonate binding. NAD(+) contacts are provided by residues Phe179–Thr182 and Asn190. Glu194 is a Zn(2+) binding site. 7-phospho-2-dehydro-3-deoxy-D-arabino-heptonate contacts are provided by residues Glu194–Lys197 and Lys250. The active-site Proton acceptor; for 3-dehydroquinate synthase activity is Glu260. 7-phospho-2-dehydro-3-deoxy-D-arabino-heptonate-binding positions include Arg264–Asn268 and His271. Residue His271 coordinates Zn(2+). His275 (proton acceptor; for 3-dehydroquinate synthase activity) is an active-site residue. Residues His287 and Lys356 each coordinate 7-phospho-2-dehydro-3-deoxy-D-arabino-heptonate. His287 lines the Zn(2+) pocket. The interval Val397–Val842 is EPSP synthase. The active-site For EPSP synthase activity is Cys824. A shikimate kinase region spans residues Ala867–Ser1059. Gly874–Thr881 serves as a coordination point for ATP. The tract at residues Leu1060–Glu1280 is 3-dehydroquinase. Catalysis depends on His1183, which acts as the Proton acceptor; for 3-dehydroquinate dehydratase activity. Lys1211 functions as the Schiff-base intermediate with substrate; for 3-dehydroquinate dehydratase activity in the catalytic mechanism. A shikimate dehydrogenase region spans residues Ala1293–Ser1598.

This sequence in the N-terminal section; belongs to the sugar phosphate cyclases superfamily. Dehydroquinate synthase family. The protein in the 2nd section; belongs to the EPSP synthase family. It in the 3rd section; belongs to the shikimate kinase family. In the 4th section; belongs to the type-I 3-dehydroquinase family. This sequence in the C-terminal section; belongs to the shikimate dehydrogenase family. In terms of assembly, homodimer. The cofactor is Zn(2+).

It is found in the cytoplasm. The enzyme catalyses 7-phospho-2-dehydro-3-deoxy-D-arabino-heptonate = 3-dehydroquinate + phosphate. It catalyses the reaction 3-dehydroquinate = 3-dehydroshikimate + H2O. It carries out the reaction shikimate + NADP(+) = 3-dehydroshikimate + NADPH + H(+). The catalysed reaction is shikimate + ATP = 3-phosphoshikimate + ADP + H(+). The enzyme catalyses 3-phosphoshikimate + phosphoenolpyruvate = 5-O-(1-carboxyvinyl)-3-phosphoshikimate + phosphate. The protein operates within metabolic intermediate biosynthesis; chorismate biosynthesis; chorismate from D-erythrose 4-phosphate and phosphoenolpyruvate: step 2/7. It participates in metabolic intermediate biosynthesis; chorismate biosynthesis; chorismate from D-erythrose 4-phosphate and phosphoenolpyruvate: step 3/7. It functions in the pathway metabolic intermediate biosynthesis; chorismate biosynthesis; chorismate from D-erythrose 4-phosphate and phosphoenolpyruvate: step 4/7. Its pathway is metabolic intermediate biosynthesis; chorismate biosynthesis; chorismate from D-erythrose 4-phosphate and phosphoenolpyruvate: step 5/7. The protein operates within metabolic intermediate biosynthesis; chorismate biosynthesis; chorismate from D-erythrose 4-phosphate and phosphoenolpyruvate: step 6/7. The AROM polypeptide catalyzes 5 consecutive enzymatic reactions in prechorismate polyaromatic amino acid biosynthesis. The protein is Pentafunctional AROM polypeptide of Paracoccidioides lutzii (strain ATCC MYA-826 / Pb01) (Paracoccidioides brasiliensis).